Here is a 538-residue protein sequence, read N- to C-terminus: Myeloid cell nuclear differentiation antigen-like protein (538 aa).

The 87-residue stretch at 1 to 87 folds into the Pyrin domain; it reads MAEYKKIVLL…AKKLKTEKAK (87 aa). Positions 120–306 are disordered; sequence SYKSVPSSKK…PQPQNQNIPR (187 aa). Basic and acidic residues-rich tracts occupy residues 135–153 and 245–262; these read AKTE…DHLP and RREE…KEPD. The span at 276 to 305 shows a compositional bias: low complexity; it reads SPILHSSSSASSNIPSATNQKPQPQNQNIP. An HIN-200 domain is found at 299–499; the sequence is PQNQNIPRGA…CGDHSFVKIK (201 aa).

The protein belongs to the HIN-200 family. In terms of tissue distribution, highest expression observed in spleen and thymus with moderate levels in bone marrow, lung, skin and heart, low levels in muscle, liver and intestine and little or no expression in brain and pancreas.

It localises to the nucleus. Suppresses cell growth when expressed ectopically. This Mus musculus (Mouse) protein is Myeloid cell nuclear differentiation antigen-like protein.